Here is a 553-residue protein sequence, read N- to C-terminus: Syntaxin-binding protein 4 (553 aa).

Phosphoserine is present on residues Ser-10, Ser-12, Ser-99, and Ser-212. Positions 19–105 (AFQMITIAKE…RLESAWEIAF (87 aa)) constitute a PDZ domain. Residues 291–417 (SSEADEMERL…VLDCQLRKSE (127 aa)) are a coiled coil. Ser-463 carries the phosphoserine modification. The region spanning 496 to 529 (DCLPYGWEEAYTADGIKYFINHVTQTTSWIHPVM) is the WW domain.

Interacts with STX4A. Phosphorylated on Ser-99 by PKB/AKT2 after insulin treatment. Phosphorylation on Ser-99 abolishes the interaction with STX4A.

Its subcellular location is the cytoplasm. Functionally, plays a role in the translocation of transport vesicles from the cytoplasm to the plasma membrane. Inhibits the translocation of SLC2A4 from intracellular vesicles to the plasma membrane by STX4A binding and preventing the interaction between STX4A and VAMP2. Stimulation with insulin disrupts the interaction with STX4A, leading to increased levels of SLC2A4 at the plasma membrane. May also play a role in the regulation of insulin release by pancreatic beta cells after stimulation by glucose. The sequence is that of Syntaxin-binding protein 4 (STXBP4) from Homo sapiens (Human).